The primary structure comprises 696 residues: UvrABC system protein C (696 aa).

The GIY-YIG domain occupies 16–95; that stretch reads TEPGVYKFRD…IKRFDPRFNV (80 aa). One can recognise a UVR domain in the interval 208–243; sequence DKVTRKLNADMMAAAEELDFERAARLRDDLEAIDKV.

Belongs to the UvrC family. In terms of assembly, interacts with UvrB in an incision complex.

It localises to the cytoplasm. Functionally, the UvrABC repair system catalyzes the recognition and processing of DNA lesions. UvrC both incises the 5' and 3' sides of the lesion. The N-terminal half is responsible for the 3' incision and the C-terminal half is responsible for the 5' incision. The protein is UvrABC system protein C of Corynebacterium glutamicum (strain R).